We begin with the raw amino-acid sequence, 203 residues long: Urease accessory protein UreG (203 aa).

13–20 is a binding site for GTP; sequence GPVGSGKT.

The protein belongs to the SIMIBI class G3E GTPase family. UreG subfamily. In terms of assembly, homodimer. UreD, UreF and UreG form a complex that acts as a GTP-hydrolysis-dependent molecular chaperone, activating the urease apoprotein by helping to assemble the nickel containing metallocenter of UreC. The UreE protein probably delivers the nickel.

The protein resides in the cytoplasm. Functionally, facilitates the functional incorporation of the urease nickel metallocenter. This process requires GTP hydrolysis, probably effectuated by UreG. The chain is Urease accessory protein UreG from Methylobacillus flagellatus (strain ATCC 51484 / DSM 6875 / VKM B-1610 / KT).